We begin with the raw amino-acid sequence, 94 residues long: Large ribosomal subunit protein uL24c (94 aa).

Belongs to the universal ribosomal protein uL24 family. In terms of assembly, part of the 50S ribosomal subunit.

The protein resides in the plastid. It localises to the chloroplast. In terms of biological role, one of two assembly initiator proteins, it binds directly to the 5'-end of the 23S rRNA, where it nucleates assembly of the 50S subunit. The sequence is that of Large ribosomal subunit protein uL24c (rpl24) from Cyanidium caldarium (Red alga).